Consider the following 283-residue polypeptide: Protein/nucleic acid deglycase HchA (283 aa).

Positions 86, 91, and 123 each coordinate Zn(2+). The active-site Nucleophile is C185.

This sequence belongs to the peptidase C56 family. HchA subfamily. Homodimer.

It is found in the cytoplasm. It carries out the reaction N(omega)-(1-hydroxy-2-oxopropyl)-L-arginyl-[protein] + H2O = lactate + L-arginyl-[protein] + H(+). It catalyses the reaction N(6)-(1-hydroxy-2-oxopropyl)-L-lysyl-[protein] + H2O = lactate + L-lysyl-[protein] + H(+). The enzyme catalyses S-(1-hydroxy-2-oxopropyl)-L-cysteinyl-[protein] + H2O = lactate + L-cysteinyl-[protein] + H(+). The catalysed reaction is N(omega)-(1-hydroxy-2-oxoethyl)-L-arginyl-[protein] + H2O = L-arginyl-[protein] + glycolate + H(+). It carries out the reaction N(6)-(1-hydroxy-2-oxoethyl)-L-lysyl-[protein] + H2O = glycolate + L-lysyl-[protein] + H(+). It catalyses the reaction S-(1-hydroxy-2-oxoethyl)-L-cysteinyl-[protein] + H2O = glycolate + L-cysteinyl-[protein] + H(+). The enzyme catalyses N(2)-(1-hydroxy-2-oxopropyl)-dGTP + H2O = lactate + dGTP + H(+). The catalysed reaction is N(2)-(1-hydroxy-2-oxopropyl)-GTP + H2O = lactate + GTP + H(+). It carries out the reaction N(2)-(1-hydroxy-2-oxopropyl)-GDP + H2O = lactate + GDP + H(+). It catalyses the reaction N(2)-(1-hydroxy-2-oxopropyl)-GMP + H2O = lactate + GMP + H(+). The enzyme catalyses N(2)-(1-hydroxy-2-oxoethyl)-dGTP + H2O = dGTP + glycolate + H(+). The catalysed reaction is N(2)-(1-hydroxy-2-oxoethyl)-GTP + H2O = glycolate + GTP + H(+). It carries out the reaction N(2)-(1-hydroxy-2-oxoethyl)-GDP + H2O = glycolate + GDP + H(+). It catalyses the reaction N(2)-(1-hydroxy-2-oxoethyl)-GMP + H2O = glycolate + GMP + H(+). The enzyme catalyses an N(2)-(1-hydroxy-2-oxopropyl)-guanosine in RNA + H2O = a guanosine in RNA + lactate + H(+). The catalysed reaction is an N(2)-(1-hydroxy-2-oxopropyl)-2'-deoxyguanosine in DNA + H2O = a 2'-deoxyguanosine in DNA + lactate + H(+). It carries out the reaction an N(2)-(1-hydroxy-2-oxoethyl)-guanosine in RNA + H2O = a guanosine in RNA + glycolate + H(+). It catalyses the reaction an N(2)-(1-hydroxy-2-oxoethyl)-2'-deoxyguanosine in DNA + H2O = a 2'-deoxyguanosine in DNA + glycolate + H(+). In terms of biological role, protein and nucleotide deglycase that catalyzes the deglycation of the Maillard adducts formed between amino groups of proteins or nucleotides and reactive carbonyl groups of glyoxals. Thus, functions as a protein deglycase that repairs methylglyoxal- and glyoxal-glycated proteins, and releases repaired proteins and lactate or glycolate, respectively. Deglycates cysteine, arginine and lysine residues in proteins, and thus reactivates these proteins by reversing glycation by glyoxals. Acts on early glycation intermediates (hemithioacetals and aminocarbinols), preventing the formation of Schiff bases and advanced glycation endproducts (AGE). Also functions as a nucleotide deglycase able to repair glycated guanine in the free nucleotide pool (GTP, GDP, GMP, dGTP) and in DNA and RNA. Is thus involved in a major nucleotide repair system named guanine glycation repair (GG repair), dedicated to reversing methylglyoxal and glyoxal damage via nucleotide sanitization and direct nucleic acid repair. Plays an important role in protecting cells from carbonyl stress. The chain is Protein/nucleic acid deglycase HchA from Escherichia coli O7:K1 (strain IAI39 / ExPEC).